We begin with the raw amino-acid sequence, 75 residues long: UPF0352 protein YejL (75 aa).

This sequence belongs to the UPF0352 family.

The sequence is that of UPF0352 protein YejL from Salmonella agona (strain SL483).